We begin with the raw amino-acid sequence, 90 residues long: Small ribosomal subunit protein uS15 (90 aa).

This sequence belongs to the universal ribosomal protein uS15 family. Part of the 30S ribosomal subunit. Forms a bridge to the 50S subunit in the 70S ribosome, contacting the 23S rRNA.

Its function is as follows. One of the primary rRNA binding proteins, it binds directly to 16S rRNA where it helps nucleate assembly of the platform of the 30S subunit by binding and bridging several RNA helices of the 16S rRNA. Forms an intersubunit bridge (bridge B4) with the 23S rRNA of the 50S subunit in the ribosome. This Campylobacter jejuni subsp. jejuni serotype O:6 (strain 81116 / NCTC 11828) protein is Small ribosomal subunit protein uS15.